The sequence spans 761 residues: MHEIGEHLTTNTGWDIIKNRYEAAQAITEGSNFMIGNGFMGYRGTFAEDGKDAYAACIVTDTWDKADGKWEELSTVPNALLTLLHVDGEPFIMSEEAASFERTLDLSQGVTSRKVSQRMKNGATITIHEEKFASYRKKHAVLMKYTVESDQDTDAVLDTGIDYDVWSINGDHLQGHHYFSHPTGDGVTAKTVSYEDTVTVVETCSLDADASEEDYQNPDGSGRTFSLSLEAGKPVTLEKAMIIYSSNDVDNPQDEALLEAKHMQSYEEEKAANRLEWDNLWSHYDVTIQNNIIDQVALRFNIYHAIIATPVHKSLPIGARGLSCQAYQGAAFWDQEIYNMPMYLYSNPEIARNILKYRHRTLDGARRKAKRLGYEGAYYAWISGKTGDELCPDFFFKDVLSGRDIRNHFNDWQIHISPDIAYAVKKYHQVTGDDAFIRDYGAEMIFEIARFLASHAVYKPMRGRYEFMRVQGPDEYHENVDNNAFTNHQAMFTLQAADELLQTLDEKTLSAVKEKIGLSDDEISLWRDMLANTYVPKPDKHGIIEQFDGYYDLETIIPAKKVTERLIKEDEYYGYPNGVTVRTQCIKQADVIQLFVLHPHLYDRKTVELNYEFYEPRTLHFSSLSPSSYAIVAAQIDKVEEAYRNFRKSVMIDLLNTNEAVSGGTFIGGIHTAANGASWQMVVNGFGGLSVHGDDIHLSPRLPDAWDGYTFKAIVKGQTLEVDVTKEQITITNKSEDRKPLTLHIFGEKSVLDSERITKSR.

327–328 (YQ) is a glycerol binding site. 333–334 (WD) serves as a coordination point for substrate. Catalysis depends on E475, which acts as the Proton donor. 587–588 (KQ) serves as a coordination point for substrate.

Belongs to the glycosyl hydrolase 65 family. In terms of assembly, homodimer.

The enzyme catalyses 2-O-(alpha-D-glucopyranosyl)glycerol + phosphate = beta-D-glucose 1-phosphate + glycerol. In terms of biological role, catalyzes both the (1) reversible phosphorolysis of 2-O-alpha-D-glucopyranosyl-sn-glycerol (GG) from beta-D-glucose 1-phosphate (betaGlc1P) and glycerol and (2) the hydrolysis of betaGlc1P. the betaGlc1P hydrolysis is a glucosyl-transfer reaction to an acceptor water molecule that produces an anomer-inverted alpha-glucose, not a phosphatase-type reaction. In the absence of glycerol produces alpha-D-glucopyranose and phosphate from beta-D-glucopyranose 1-phosphate. In Bacillus selenitireducens (strain ATCC 700615 / DSM 15326 / MLS10), this protein is 1,2-alpha-glucosylglycerol phosphorylase.